The primary structure comprises 396 residues: Elongation factor Tu 2 (396 aa).

One can recognise a tr-type G domain in the interval Lys-10–Glu-206. The segment at Gly-19–Thr-26 is G1. Residue Gly-19–Thr-26 participates in GTP binding. Residue Thr-26 coordinates Mg(2+). The segment at Gly-60 to Asn-64 is G2. Residues Asp-81 to Gly-84 form a G3 region. Residues Asp-81–His-85 and Asn-136–Asp-139 contribute to the GTP site. Residues Asn-136–Asp-139 are G4. Positions Ser-174 to Lys-176 are G5.

The protein belongs to the TRAFAC class translation factor GTPase superfamily. Classic translation factor GTPase family. EF-Tu/EF-1A subfamily. Monomer.

Its subcellular location is the cytoplasm. The catalysed reaction is GTP + H2O = GDP + phosphate + H(+). Functionally, GTP hydrolase that promotes the GTP-dependent binding of aminoacyl-tRNA to the A-site of ribosomes during protein biosynthesis. This chain is Elongation factor Tu 2, found in Albidiferax ferrireducens (strain ATCC BAA-621 / DSM 15236 / T118) (Rhodoferax ferrireducens).